A 312-amino-acid chain; its full sequence is Fasciclin-like arabinogalactan protein elcF (312 aa).

Positions 1–16 (MKLFTLLLPALTSAHS) are cleaved as a signal peptide. FAS1 domains lie at 17–160 (LSTL…NASM) and 162–289 (LPHN…DKVL). Residues N48, N68, N113, N157, and N165 are each glycosylated (N-linked (GlcNAc...) asparagine).

This sequence belongs to the fasciclin-like AGP family.

The protein operates within secondary metabolite biosynthesis. Functionally, fasciclin-like arabinogalactan protein; part of the gene cluster that mediates the biosynthesis of elsinochrome C, a perelyenequinone phytotoxin structurally similar to cercosporin. The first step of elsinochrome C biosynthesis is performed by the polyketide synthase elcA which catalyzes the formation of nor-toralactone. The starter unit acyltransferase (SAT) domain of elcA initiates polyketide extension by the selective utilization of acetyl-CoA, which is elongated to the heptaketide in the beta-ketoacyl synthase (KS) domain by successive condensations with six malonyl units introduced by the malonyl acyltransferase (MAT) domain. The product template (PT) domain catalyzes C4-C9 and C2-C11 aldol cyclizations and dehydrations to a trihydroxynaphthalene, which is thought to be delivered to the thioesterase (TE) domain for product release. The bifunctional enzyme elcB then methylates nor-toralactone to toralactone before conducting an unusual oxidative aromatic ring opening. The next step in perylenequinone biosynthesis is an O-methylation at the nascent OH-6 of the elcB product performed by the O-methyltransferase elcD. The oxidative coupling of the two monomeric naphthol units in perylenequinone biosynthesis is catalyzed by the FAD-dependent monooxygenase elcE and the multicopper oxidase elcG. ElcG might catalyze the first intermolecular coupling in a regio- and stereo-selective manner via a phenol radical coupling mechanism and the elcE could forge the second C-C bond intramolecularly via a hydride transfer mechanism. The fasciclin domain-containing protein elcF might also play a role duting this step. The last piece of the puzzle in the biosynthesis of elsinochrome C is the additional annulation by enolate coupling to afford the dihydrobenzo(ghi)perylenequinone system, catalyzed by the FAD-dependent monooxygenase elcH. The sequence is that of Fasciclin-like arabinogalactan protein elcF from Phaeosphaeria nodorum (strain SN15 / ATCC MYA-4574 / FGSC 10173) (Glume blotch fungus).